Reading from the N-terminus, the 1211-residue chain is DNA polymerase beta (1211 aa).

Repeat copies occupy residues 1074–1077 (KPAG), 1078–1081 (KPAG), 1082–1085 (NPAG), and 1086–1089 (NPAG). A 4 X 4 AA tandem repeats of [NK]-[P]-A-G region spans residues 1074-1089 (KPAGKPAGNPAGNPAG).

It belongs to the DNA polymerase type-B family.

The catalysed reaction is DNA(n) + a 2'-deoxyribonucleoside 5'-triphosphate = DNA(n+1) + diphosphate. Its function is as follows. DNA-directed DNA polymerase involved in viral DNA replication. This African swine fever virus (strain Badajoz 1971 Vero-adapted) (Ba71V) protein is DNA polymerase beta (DPOL).